The chain runs to 427 residues: Trigger factor (427 aa).

One can recognise a PPIase FKBP-type domain in the interval 163 to 248 (GDTVILDFEG…LHEIKTKEVP (86 aa)).

It belongs to the FKBP-type PPIase family. Tig subfamily.

Its subcellular location is the cytoplasm. It catalyses the reaction [protein]-peptidylproline (omega=180) = [protein]-peptidylproline (omega=0). Its function is as follows. Involved in protein export. Acts as a chaperone by maintaining the newly synthesized protein in an open conformation. Functions as a peptidyl-prolyl cis-trans isomerase. This Listeria innocua serovar 6a (strain ATCC BAA-680 / CLIP 11262) protein is Trigger factor.